Here is a 293-residue protein sequence, read N- to C-terminus: Homoserine kinase (293 aa).

84–94 (PFSRGLGSSSS) contributes to the ATP binding site.

The protein belongs to the GHMP kinase family. Homoserine kinase subfamily.

The protein resides in the cytoplasm. It catalyses the reaction L-homoserine + ATP = O-phospho-L-homoserine + ADP + H(+). It participates in amino-acid biosynthesis; L-threonine biosynthesis; L-threonine from L-aspartate: step 4/5. In terms of biological role, catalyzes the ATP-dependent phosphorylation of L-homoserine to L-homoserine phosphate. This chain is Homoserine kinase, found in Campylobacter fetus subsp. fetus (strain 82-40).